Reading from the N-terminus, the 217-residue chain is Ribosomal RNA small subunit methyltransferase G (217 aa).

S-adenosyl-L-methionine is bound by residues Gly79, Leu84, 130–131 (IE), and Arg148.

This sequence belongs to the methyltransferase superfamily. RNA methyltransferase RsmG family.

It is found in the cytoplasm. The catalysed reaction is guanosine(527) in 16S rRNA + S-adenosyl-L-methionine = N(7)-methylguanosine(527) in 16S rRNA + S-adenosyl-L-homocysteine. In terms of biological role, specifically methylates the N7 position of guanine in position 527 of 16S rRNA. The polypeptide is Ribosomal RNA small subunit methyltransferase G (Desulfotalea psychrophila (strain LSv54 / DSM 12343)).